A 733-amino-acid polypeptide reads, in one-letter code: Hypermethylated in cancer 1 protein (733 aa).

The region spanning 47–110 is the BTB domain; it reads CDVIIVVQNA…IYTGRLADGA (64 aa). The interval 154–315 is mediates HDAC-dependent transcriptional repression; it reads KYCHLRGGGG…PFRGGSGSPG (162 aa). Arginine 159 is subject to Omega-N-methylarginine. The interval 189 to 209 is disordered; it reads YPSPVGPPPPPAAEPPSGPEA. The segment covering 192-206 has biased composition (pro residues); it reads PVGPPPPPAAEPPSG. Phosphoserine is present on serine 237. An interaction with CTBP1 region spans residues 241 to 247; that stretch reads GLDLSKK. The disordered stretch occupies residues 241–421; it reads GLDLSKKSPP…PGGHLEGYPC (181 aa). Residue serine 248 is modified to Phosphoserine. A compositionally biased stretch (pro residues) spans 284-293; the sequence is LALPSLPPLP. N6-acetyllysine; alternate is present on lysine 333. Lysine 333 is covalently cross-linked (Glycyl lysine isopeptide (Lys-Gly) (interchain with G-Cter in SUMO); alternate). Basic and acidic residues predominate over residues 344–361; it reads ELGRERGSPSERCEERGG. At serine 366 the chain carries Phosphoserine. Residues 368–380 show a composition bias toward pro residues; sequence GGPPLGLAPPPRY. 5 consecutive C2H2-type zinc fingers follow at residues 439–459, 509–529, 537–557, 565–585, and 593–613; these read CIPCGKGFPSSEQLNAHVEAH, CASCDKSYKDPATLRQHEKTH, CTICGKKFTQRGTMTRHMRSH, CDACGMRFTRQYRLTEHMRIH, and CQVCGGKFAQQRNLISHMKMH. Position 704 is a phosphoserine (serine 704).

It belongs to the krueppel C2H2-type zinc-finger protein family. Hic subfamily. In terms of assembly, self-associates. Interacts with HIC2. Interacts with CTBP1 and CTBP2. Interacts with TCF7L2 and ARID1A. Interacts with MTA1 and MBD3; indicative for an association with the NuRD complex. Interacts with SIRT1. In terms of processing, acetylated on several residues, including Lys-333. Lys-333 is deacetylated by SIRT1. Post-translationally, sumoylated on Lys-333 by a PIAS family member, which enhances interaction with MTA1, positively regulates transcriptional repression activity and is enhanced by HDAC4. As to expression, ubiquitously expressed with highest levels found in lung, colon, prostate, thymus, testis and ovary. Expression is absent or decreased in many tumor cells.

It localises to the nucleus. Functionally, transcriptional repressor. Recognizes and binds to the consensus sequence '5-[CG]NG[CG]GGGCA[CA]CC-3'. May act as a tumor suppressor. Involved in development of head, face, limbs and ventral body wall. Involved in down-regulation of SIRT1 and thereby is involved in regulation of p53/TP53-dependent apoptotic DNA-damage responses. The specific target gene promoter association seems to be depend on corepressors, such as CTBP1 or CTBP2 and MTA1. In cooperation with MTA1 (indicative for an association with the NuRD complex) represses transcription from CCND1/cyclin-D1 and CDKN1C/p57Kip2 specifically in quiescent cells. Involved in regulation of the Wnt signaling pathway probably by association with TCF7L2 and preventing TCF7L2 and CTNNB1 association with promoters of TCF-responsive genes. Seems to repress transcription from E2F1 and ATOH1 which involves ARID1A, indicative for the participation of a distinct SWI/SNF-type chromatin-remodeling complex. Probably represses transcription of ACKR3, FGFBP1 and EFNA1. This chain is Hypermethylated in cancer 1 protein (HIC1), found in Homo sapiens (Human).